A 484-amino-acid polypeptide reads, in one-letter code: UDP-N-acetylmuramate--L-alanine ligase (484 aa).

Position 125-131 (125-131) interacts with ATP; sequence GTHGKTT.

It belongs to the MurCDEF family.

The protein resides in the cytoplasm. The enzyme catalyses UDP-N-acetyl-alpha-D-muramate + L-alanine + ATP = UDP-N-acetyl-alpha-D-muramoyl-L-alanine + ADP + phosphate + H(+). The protein operates within cell wall biogenesis; peptidoglycan biosynthesis. Its function is as follows. Cell wall formation. The chain is UDP-N-acetylmuramate--L-alanine ligase from Buchnera aphidicola subsp. Acyrthosiphon pisum (strain 5A).